The sequence spans 628 residues: Leucine-rich repeat and fibronectin type-III domain-containing protein 3 (628 aa).

The N-terminal stretch at 1 to 16 (MAVLPLLLCLLPLAPA) is a signal peptide. The Extracellular segment spans residues 17 to 540 (SSPSQPATPS…APHAPFLGGT (524 aa)). The 41-residue stretch at 19–59 (PSQPATPSPCPRRCRCQTQSLPLSVLCPGAGLLFVPPSLDR) folds into the LRRNT domain. LRR repeat units lie at residues 84 to 105 (GLLH…AFAD), 108 to 129 (ALRA…QLRG), 132 to 153 (NLRH…ALDD), 157 to 178 (TLED…ALGR), 181 to 202 (NVNT…AFSR), and 205 to 226 (KLAR…PLFS). The LRRCT domain maps to 249–295 (NPLHCNCELVWLRRLAREDDLEACASPPALGGRYFWAVGEEEFVCEP). In terms of domain architecture, Ig-like spans 295-382 (PPVVTHRSPP…GEATAAVELT (88 aa)). A disulfide bridge links cysteine 317 with cysteine 366. N-linked (GlcNAc...) asparagine glycosylation is found at asparagine 348 and asparagine 393. A disordered region spans residues 380–432 (ELTVGPPPPPQLANSTSCDPPRDGDPDALTPPSAASASAAAKAADTGPPTDRG). The span at 406–429 (DALTPPSAASASAAAKAADTGPPT) shows a compositional bias: low complexity. The Fibronectin type-III domain maps to 427 to 525 (PPTDRGVQVT…GCARFSTEPA (99 aa)). The helical transmembrane segment at 541–561 (MIIALGGVIVASVLVFIFVLL) threads the bilayer. Residues 562–628 (MRYKVHGGQP…WRPSHEPTGP (67 aa)) lie on the Cytoplasmic side of the membrane. Residues 587–628 (QTNGSLGPTPAPPAPEPAAPRAHTVVQLDCEPWRPSHEPTGP) form a disordered region. Residues 595 to 604 (TPAPPAPEPA) are compositionally biased toward pro residues. Positions 617–628 (EPWRPSHEPTGP) are enriched in basic and acidic residues.

Belongs to the LRFN family. As to quaternary structure, can form heteromeric complexes with LRFN1, LRFN2, LRFN4 and LRFN5. Able to form homomeric complexes across cell junctions, between adjacent cells. Does not interact with DLG4. In terms of processing, N-glycosylated.

Its subcellular location is the cell membrane. It is found in the cell projection. It localises to the axon. The protein localises to the dendrite. The protein resides in the synapse. Its subcellular location is the presynaptic cell membrane. It is found in the postsynaptic cell membrane. Cell adhesion molecule that mediates homophilic cell-cell adhesion in a Ca(2+)-independent manner. Promotes neurite outgrowth in hippocampal neurons. The chain is Leucine-rich repeat and fibronectin type-III domain-containing protein 3 (LRFN3) from Ailuropoda melanoleuca (Giant panda).